A 31-amino-acid polypeptide reads, in one-letter code: GCISTGSFCTLSKGCCTKNCGWNFKCNPPNQ.

3 disulfides stabilise this stretch: C2–C16, C9–C20, and C15–C26. 4-hydroxyproline occurs at positions 28 and 29.

This sequence belongs to the nemertide family. In terms of tissue distribution, confined to the epidermis and to the mucus layer.

Its subcellular location is the secreted. Potent toxin, demonstrating strong inhibitory effects on insect sodium channels (Nav) and reduced activity on mammalian sodium channels. Potently inhibits inactivation of insect sodium channels of B.germanica (BgNav1) (EC(50)=11.1 nM). Also delays the inactivation of most mammalian Nav (human Nav1.1/SCN1A; EC(50)=92 nM, rat Nav1.2/SCN2A; EC(50)=134.2 nM, rat Nav1.3/SCN3A; EC(50)=12.9 nM, rat Nav1.4/SCN4A; EC(50)=14.6 nM, human Nav1.5/SCN5A; EC(50)=27.8 nM, mouse Nav1.6/SCN8A; EC(50)=123.6 nM, human Nav1.9/SCN9A; EC(50)=80.5 nM). Inactivation is completely prevented by a concentration of 1 uM, resulting in sustained, non-inactivating currents. In addition, the toxin significantly enhances the recovery from inactivation, and the open state is not required for the toxin to interact with the channel. In vivo, injection into brine shrimp (Artemia salina) stops movement or causes death after 24 hours (EC(50)=0.4 uM). The polypeptide is Nemertide alpha-4 (Lineus sanguineus (Ribbon worm)).